The primary structure comprises 282 residues: Hydrogenase expression/formation protein HoxQ (282 aa).

This sequence belongs to the HupH/HyaF family.

This chain is Hydrogenase expression/formation protein HoxQ (hoxQ), found in Cupriavidus necator (strain ATCC 17699 / DSM 428 / KCTC 22496 / NCIMB 10442 / H16 / Stanier 337) (Ralstonia eutropha).